Consider the following 481-residue polypeptide: Leukocyte immunoglobulin-like receptor subfamily A member 6 (481 aa).

The first 23 residues, 1-23, serve as a signal peptide directing secretion; the sequence is MTPALTALLCLGLSLGPRTRVQA. At 24–447 the chain is on the extracellular side; it reads GPFPKPTLWA…SHAKDYTVEN (424 aa). Cys-49 and Cys-98 are oxidised to a cystine. The segment covering 59 to 70 has biased composition (basic and acidic residues); the sequence is QLDKEGSPEPLD. The interval 59–78 is disordered; the sequence is QLDKEGSPEPLDRNNPLEPK. An N-linked (GlcNAc...) asparagine glycan is attached at Asn-139. 2 disulfides stabilise this stretch: Cys-144-Cys-196 and Cys-245-Cys-296. Ig-like C2-type domains lie at 225–314 and 323–408; these read PSLL…DPLN and DTVS…HLLS. Asn-301 and Asn-340 each carry an N-linked (GlcNAc...) asparagine glycan. Residues Cys-345 and Cys-396 are joined by a disulfide bond. The disordered stretch occupies residues 419 to 439; it reads SGHSGGSSLPPTGPPSTPASH. Residues 448-468 form a helical membrane-spanning segment; sequence LIRMGMAGLVLVFLGILLFEA. The Cytoplasmic portion of the chain corresponds to 469-481; sequence QHSQRNPQDAAGR.

It localises to the membrane. May act as receptor for class I MHC antigens. This chain is Leukocyte immunoglobulin-like receptor subfamily A member 6 (LILRA6), found in Homo sapiens (Human).